A 187-amino-acid chain; its full sequence is Large ribosomal subunit protein uL10 (187 aa).

The protein belongs to the universal ribosomal protein uL10 family. Part of the ribosomal stalk of the 50S ribosomal subunit. The N-terminus interacts with L11 and the large rRNA to form the base of the stalk. The C-terminus forms an elongated spine to which L12 dimers bind in a sequential fashion forming a multimeric L10(L12)X complex.

Its function is as follows. Forms part of the ribosomal stalk, playing a central role in the interaction of the ribosome with GTP-bound translation factors. This Synechococcus sp. (strain JA-2-3B'a(2-13)) (Cyanobacteria bacterium Yellowstone B-Prime) protein is Large ribosomal subunit protein uL10.